The following is a 515-amino-acid chain: Bifunctional purine biosynthesis protein PurH (515 aa).

The MGS-like domain maps to 1 to 145 (MTKRALISVS…KNHASVTVVV (145 aa)).

The protein belongs to the PurH family.

It carries out the reaction (6R)-10-formyltetrahydrofolate + 5-amino-1-(5-phospho-beta-D-ribosyl)imidazole-4-carboxamide = 5-formamido-1-(5-phospho-D-ribosyl)imidazole-4-carboxamide + (6S)-5,6,7,8-tetrahydrofolate. The catalysed reaction is IMP + H2O = 5-formamido-1-(5-phospho-D-ribosyl)imidazole-4-carboxamide. Its pathway is purine metabolism; IMP biosynthesis via de novo pathway; 5-formamido-1-(5-phospho-D-ribosyl)imidazole-4-carboxamide from 5-amino-1-(5-phospho-D-ribosyl)imidazole-4-carboxamide (10-formyl THF route): step 1/1. It participates in purine metabolism; IMP biosynthesis via de novo pathway; IMP from 5-formamido-1-(5-phospho-D-ribosyl)imidazole-4-carboxamide: step 1/1. This Streptococcus agalactiae serotype III (strain NEM316) protein is Bifunctional purine biosynthesis protein PurH.